Consider the following 347-residue polypeptide: NADH-ubiquinone oxidoreductase chain 2 (347 aa).

Helical transmembrane passes span 3 to 23 (PLAL…TMMS), 25 to 45 (HWLT…PILM), 59 to 79 (YFMT…INLM), 93 to 115 (VASN…HFWV), 150 to 170 (NTNL…WGGL), 178 to 198 (ILAY…PFNP), 200 to 220 (LTLL…MILA), 240 to 260 (MTIM…LSGF), 274 to 294 (NSII…YFYM), and 326 to 346 (LPTL…ISML).

It belongs to the complex I subunit 2 family. Core subunit of respiratory chain NADH dehydrogenase (Complex I) which is composed of 45 different subunits. Interacts with TMEM242.

It is found in the mitochondrion inner membrane. It carries out the reaction a ubiquinone + NADH + 5 H(+)(in) = a ubiquinol + NAD(+) + 4 H(+)(out). Functionally, core subunit of the mitochondrial membrane respiratory chain NADH dehydrogenase (Complex I) which catalyzes electron transfer from NADH through the respiratory chain, using ubiquinone as an electron acceptor. Essential for the catalytic activity and assembly of complex I. This Mammuthus primigenius (Siberian woolly mammoth) protein is NADH-ubiquinone oxidoreductase chain 2.